A 237-amino-acid chain; its full sequence is Protein VP5 (237 aa).

Residues 1–148 are Cytoplasmic-facing; that stretch reads MLSIIRRKTR…TKQRCKANLR (148 aa). The interval 84-237 is disordered; the sequence is SSSKDPDISG…SKLGKSRDIC (154 aa). Basic and acidic residues-rich tracts occupy residues 85–97 and 116–130; these read SSKDPDISGQKDK and SRVREHEPIHEHEPI. A helical membrane pass occupies residues 149-165; the sequence is GDSGFVSIGRSNHPKLS. Residues 166–237 lie on the Extracellular side of the membrane; it reads REDCHNTRVP…SKLGKSRDIC (72 aa). The span at 214–231 shows a compositional bias: basic residues; the sequence is RSHRRKKAKTRTKTSKLG.

The protein localises to the host membrane. The sequence is that of Protein VP5 (VP5) from Drosophila x virus (isolate Chung/1996) (DXV).